A 310-amino-acid polypeptide reads, in one-letter code: Formimidoylglutamase (310 aa).

6 residues coordinate Mn(2+): His120, Asp148, His150, Asp152, Asp233, and Asp235.

Belongs to the arginase family. It depends on Mn(2+) as a cofactor.

The enzyme catalyses N-formimidoyl-L-glutamate + H2O = formamide + L-glutamate. It functions in the pathway amino-acid degradation; L-histidine degradation into L-glutamate; L-glutamate from N-formimidoyl-L-glutamate (hydrolase route): step 1/1. In terms of biological role, catalyzes the conversion of N-formimidoyl-L-glutamate to L-glutamate and formamide. In Nocardia farcinica (strain IFM 10152), this protein is Formimidoylglutamase.